The chain runs to 149 residues: Small ribosomal subunit protein bS18c (149 aa).

Residues 1–23 (MDKITGPFRKSKKSFRKPLPPIQ) form a disordered region.

The protein belongs to the bacterial ribosomal protein bS18 family. In terms of assembly, part of the 30S ribosomal subunit.

It localises to the plastid. This chain is Small ribosomal subunit protein bS18c, found in Cuscuta obtusiflora (Peruvian dodder).